The sequence spans 508 residues: Light-independent protochlorophyllide reductase subunit B (508 aa).

D36 serves as a coordination point for [4Fe-4S] cluster. D294 functions as the Proton donor in the catalytic mechanism. A substrate-binding site is contributed by 429–430; the sequence is GM.

This sequence belongs to the ChlB/BchB/BchZ family. In terms of assembly, protochlorophyllide reductase is composed of three subunits; ChlL, ChlN and ChlB. Forms a heterotetramer of two ChlB and two ChlN subunits. It depends on [4Fe-4S] cluster as a cofactor.

The catalysed reaction is chlorophyllide a + oxidized 2[4Fe-4S]-[ferredoxin] + 2 ADP + 2 phosphate = protochlorophyllide a + reduced 2[4Fe-4S]-[ferredoxin] + 2 ATP + 2 H2O. Its pathway is porphyrin-containing compound metabolism; chlorophyll biosynthesis (light-independent). Its function is as follows. Component of the dark-operative protochlorophyllide reductase (DPOR) that uses Mg-ATP and reduced ferredoxin to reduce ring D of protochlorophyllide (Pchlide) to form chlorophyllide a (Chlide). This reaction is light-independent. The NB-protein (ChlN-ChlB) is the catalytic component of the complex. The sequence is that of Light-independent protochlorophyllide reductase subunit B from Nostoc sp. (strain PCC 7120 / SAG 25.82 / UTEX 2576).